The sequence spans 165 residues: Lipoprotein signal peptidase (165 aa).

Transmembrane regions (helical) follow at residues 9–29, 69–89, and 100–120; these read LLTISFFVLIDWVTKLAVLLY, KYFLLLIRIVIILGILAFLFL, and FSLILLCSGAIGNVGDIFFYN. Residues aspartate 124 and aspartate 142 contribute to the active site. A helical membrane pass occupies residues 133 to 153; it reads WSFPTFNFADIFISLGTLIFV.

This sequence belongs to the peptidase A8 family.

The protein localises to the cell inner membrane. The enzyme catalyses Release of signal peptides from bacterial membrane prolipoproteins. Hydrolyzes -Xaa-Yaa-Zaa-|-(S,diacylglyceryl)Cys-, in which Xaa is hydrophobic (preferably Leu), and Yaa (Ala or Ser) and Zaa (Gly or Ala) have small, neutral side chains.. The protein operates within protein modification; lipoprotein biosynthesis (signal peptide cleavage). Its function is as follows. This protein specifically catalyzes the removal of signal peptides from prolipoproteins. The protein is Lipoprotein signal peptidase of Chlamydia felis (strain Fe/C-56) (Chlamydophila felis).